The following is a 593-amino-acid chain: DNA primase (593 aa).

The segment at 38–62 (CPFHQEKTPSFTVSDSKRFFYCFGC) adopts a CHC2-type zinc-finger fold. Residues 250–332 (NRSILVEGYF…EKKISFIRLP (83 aa)) enclose the Toprim domain. Residues glutamate 256, aspartate 300, and aspartate 302 each contribute to the Mg(2+) site.

This sequence belongs to the DnaG primase family. Monomer. Interacts with DnaB. Requires Zn(2+) as cofactor. Mg(2+) serves as cofactor.

The enzyme catalyses ssDNA + n NTP = ssDNA/pppN(pN)n-1 hybrid + (n-1) diphosphate.. Functionally, RNA polymerase that catalyzes the synthesis of short RNA molecules used as primers for DNA polymerase during DNA replication. This is DNA primase from Rickettsia typhi (strain ATCC VR-144 / Wilmington).